A 209-amino-acid polypeptide reads, in one-letter code: Protein N-terminal glutamine amidohydrolase (209 aa).

Residues Cys30, His83, and Asp99 contribute to the active site.

The protein belongs to the NTAQ1 family. Monomer. In terms of tissue distribution, widely expressed.

The protein localises to the cytoplasm. It localises to the cytosol. Its subcellular location is the nucleus. It carries out the reaction N-terminal L-glutaminyl-[protein] + H2O = N-terminal L-glutamyl-[protein] + NH4(+). Its function is as follows. Mediates the side-chain deamidation of N-terminal glutamine residues to glutamate, an important step in N-end rule pathway of protein degradation. Conversion of the resulting N-terminal glutamine to glutamate renders the protein susceptible to arginylation, polyubiquitination and degradation as specified by the N-end rule. Does not act on substrates with internal or C-terminal glutamine and does not act on non-glutamine residues in any position. Does not deaminate acetylated N-terminal glutamine. With the exception of proline, all tested second-position residues on substrate peptides do not greatly influence the activity. In contrast, a proline at position 2, virtually abolishes deamidation of N-terminal glutamine. The protein is Protein N-terminal glutamine amidohydrolase (Ntaq1) of Mus musculus (Mouse).